Consider the following 510-residue polypeptide: GMP synthase [glutamine-hydrolyzing] (510 aa).

The 191-residue stretch at 5–195 (LVLVVDFGGQ…LFNVCNLKGD (191 aa)) folds into the Glutamine amidotransferase type-1 domain. Cys82 acts as the Nucleophile in catalysis. Residues His169 and Glu171 contribute to the active site. The GMPS ATP-PPase domain maps to 196–385 (WSMSSFAEQQ…LGIPHKLVWR (190 aa)). 223 to 229 (SGGVDSS) serves as a coordination point for ATP.

As to quaternary structure, homodimer.

It catalyses the reaction XMP + L-glutamine + ATP + H2O = GMP + L-glutamate + AMP + diphosphate + 2 H(+). Its pathway is purine metabolism; GMP biosynthesis; GMP from XMP (L-Gln route): step 1/1. In terms of biological role, catalyzes the synthesis of GMP from XMP. In Clostridium botulinum (strain Loch Maree / Type A3), this protein is GMP synthase [glutamine-hydrolyzing].